The following is a 427-amino-acid chain: Serine--tRNA ligase (427 aa).

Residue 231–233 (TAE) coordinates L-serine. 262 to 264 (RSE) contributes to the ATP binding site. E285 provides a ligand contact to L-serine. Residue 349–352 (EISS) participates in ATP binding. S385 is an L-serine binding site.

This sequence belongs to the class-II aminoacyl-tRNA synthetase family. Type-1 seryl-tRNA synthetase subfamily. As to quaternary structure, homodimer. The tRNA molecule binds across the dimer.

Its subcellular location is the cytoplasm. It catalyses the reaction tRNA(Ser) + L-serine + ATP = L-seryl-tRNA(Ser) + AMP + diphosphate + H(+). It carries out the reaction tRNA(Sec) + L-serine + ATP = L-seryl-tRNA(Sec) + AMP + diphosphate + H(+). The protein operates within aminoacyl-tRNA biosynthesis; selenocysteinyl-tRNA(Sec) biosynthesis; L-seryl-tRNA(Sec) from L-serine and tRNA(Sec): step 1/1. Its function is as follows. Catalyzes the attachment of serine to tRNA(Ser). Is also able to aminoacylate tRNA(Sec) with serine, to form the misacylated tRNA L-seryl-tRNA(Sec), which will be further converted into selenocysteinyl-tRNA(Sec). The polypeptide is Serine--tRNA ligase (Allorhizobium ampelinum (strain ATCC BAA-846 / DSM 112012 / S4) (Agrobacterium vitis (strain S4))).